A 453-amino-acid polypeptide reads, in one-letter code: Growth/differentiation factor 9 (453 aa).

An N-terminal signal peptide occupies residues 1-25; it reads MALPNKFFLWFCCFAWLCFPISLDS. Residues 26-318 constitute a propeptide that is removed on maturation; the sequence is QPSRGEAQIV…EGVRLSRHRR (293 aa). Residues Asn106, Asn163, Asn236, Asn255, and Asn269 are each glycosylated (N-linked (GlcNAc...) asparagine). A disordered region spans residues 281–300; it reads SLHPKRKPSQDPDQKRGLSA. Asn337 is a glycosylation site (N-linked (GlcNAc...) asparagine). 3 disulfide bridges follow: Cys352-Cys418, Cys381-Cys450, and Cys385-Cys452.

The protein belongs to the TGF-beta family. Homodimer or heterodimer (Potential). But, in contrast to other members of this family, cannot be disulfide-linked. Phosphorylated; phosphorylation is critical for GDF9 function.

It is found in the secreted. Required for ovarian folliculogenesis. The polypeptide is Growth/differentiation factor 9 (GDF9) (Bos taurus (Bovine)).